A 125-amino-acid chain; its full sequence is MAAMTDVTDPSSVAMESATEKIIILPGHSADLTSVTFQIQKEDHTLGNSLRYVIMKNPEVEFCGYSIPHPSEAKMNFRIQTAPSTTAVDVLRKGLDDLIDLCDAVTEKFTEQLPRDTSTTMEVDG.

Belongs to the archaeal Rpo11/eukaryotic RPB11/RPC19 RNA polymerase subunit family. As to quaternary structure, component of the RNA polymerase I (Pol I) and RNA polymerase III (Pol III) complexes consisting of 14 and 17 subunits, respectively.

It is found in the nucleus. Its function is as follows. DNA-dependent RNA polymerase catalyzes the transcription of DNA into RNA using the four ribonucleoside triphosphates as substrates. Common core component of RNA polymerases I and III which synthesize ribosomal RNA precursors and small RNAs, such as 5S rRNA and tRNAs, respectively. This is DNA-directed RNA polymerases I and III subunit RPAC2 (rpc19) from Schizosaccharomyces pombe (strain 972 / ATCC 24843) (Fission yeast).